We begin with the raw amino-acid sequence, 380 residues long: Queuine tRNA-ribosyltransferase (380 aa).

Asp96 functions as the Proton acceptor in the catalytic mechanism. Residues 96–100, Asp150, Gln193, and Gly220 each bind substrate; that span reads DSGGF. Positions 251 to 257 are RNA binding; sequence GVGAPDS. The Nucleophile role is filled by Asp270. An RNA binding; important for wobble base 34 recognition region spans residues 275–279; sequence TRIAR. Residues Cys308, Cys310, Cys313, and His339 each coordinate Zn(2+).

The protein belongs to the queuine tRNA-ribosyltransferase family. Homodimer. Within each dimer, one monomer is responsible for RNA recognition and catalysis, while the other monomer binds to the replacement base PreQ1. It depends on Zn(2+) as a cofactor.

It carries out the reaction 7-aminomethyl-7-carbaguanine + guanosine(34) in tRNA = 7-aminomethyl-7-carbaguanosine(34) in tRNA + guanine. It participates in tRNA modification; tRNA-queuosine biosynthesis. Its function is as follows. Catalyzes the base-exchange of a guanine (G) residue with the queuine precursor 7-aminomethyl-7-deazaguanine (PreQ1) at position 34 (anticodon wobble position) in tRNAs with GU(N) anticodons (tRNA-Asp, -Asn, -His and -Tyr). Catalysis occurs through a double-displacement mechanism. The nucleophile active site attacks the C1' of nucleotide 34 to detach the guanine base from the RNA, forming a covalent enzyme-RNA intermediate. The proton acceptor active site deprotonates the incoming PreQ1, allowing a nucleophilic attack on the C1' of the ribose to form the product. After dissociation, two additional enzymatic reactions on the tRNA convert PreQ1 to queuine (Q), resulting in the hypermodified nucleoside queuosine (7-(((4,5-cis-dihydroxy-2-cyclopenten-1-yl)amino)methyl)-7-deazaguanosine). The chain is Queuine tRNA-ribosyltransferase from Streptococcus pneumoniae (strain Hungary19A-6).